Reading from the N-terminus, the 403-residue chain is S-adenosylmethionine:tRNA ribosyltransferase-isomerase (403 aa).

It belongs to the QueA family. In terms of assembly, monomer.

The protein localises to the cytoplasm. The enzyme catalyses 7-aminomethyl-7-carbaguanosine(34) in tRNA + S-adenosyl-L-methionine = epoxyqueuosine(34) in tRNA + adenine + L-methionine + 2 H(+). Its pathway is tRNA modification; tRNA-queuosine biosynthesis. In terms of biological role, transfers and isomerizes the ribose moiety from AdoMet to the 7-aminomethyl group of 7-deazaguanine (preQ1-tRNA) to give epoxyqueuosine (oQ-tRNA). The polypeptide is S-adenosylmethionine:tRNA ribosyltransferase-isomerase (Psychrobacter arcticus (strain DSM 17307 / VKM B-2377 / 273-4)).